Reading from the N-terminus, the 295-residue chain is sn-glycerol-3-phosphate transport system permease protein UgpA (295 aa).

Over 1 to 11 the chain is Cytoplasmic; the sequence is MSSSRPVFRSR. A helical membrane pass occupies residues 12-32; it reads WLPYLLVAPQLIITVIFFIWP. Over 33–80 the chain is Periplasmic; the sequence is AGEALWYSLQSVDPFGFSSRFVGLDNFVALFHDSYYIDSFWTTIKFST. The ABC transmembrane type-1 domain maps to 76 to 284; sequence IKFSTFVTVS…FLVIVLTVMQ (209 aa). The helical transmembrane segment at 81 to 101 threads the bilayer; that stretch reads FVTVSGLLVSLFFAALVEYIV. Over 102-109 the chain is Cytoplasmic; that stretch reads RGSRFYQT. The helical transmembrane segment at 110 to 130 threads the bilayer; that stretch reads LMLLPYAVAPAVAAVLWIFLF. The Periplasmic portion of the chain corresponds to 131 to 156; the sequence is NPGRGLITHFLAEFGYDWNHAQNSGQ. Residues 157 to 177 traverse the membrane as a helical segment; it reads AMFLVVFASVWKQISYNFLFF. Residues 178–207 are Cytoplasmic-facing; it reads YAALQSIPRSLIEAAAIDGAGPIRRFFKIA. The helical transmembrane segment at 208 to 228 threads the bilayer; the sequence is LPLIAPVSFFLLVVNLVYAFF. At 229-262 the chain is on the periplasmic side; the sequence is DTFPVIDAATSGGPVQATTTLIYKIYREGFTGLD. Residues 263–283 traverse the membrane as a helical segment; the sequence is LASSAAQSVVLMFLVIVLTVM. Topologically, residues 284-295 are cytoplasmic; the sequence is QFRYVESKVRYQ.

The protein belongs to the binding-protein-dependent transport system permease family. UgpAE subfamily. As to quaternary structure, the complex is composed of two ATP-binding proteins (UgpC), two transmembrane proteins (UgpA and UgpE) and a solute-binding protein (UgpB).

It is found in the cell inner membrane. In terms of biological role, part of the ABC transporter complex UgpBAEC involved in sn-glycerol-3-phosphate (G3P) import. Probably responsible for the translocation of the substrate across the membrane. The protein is sn-glycerol-3-phosphate transport system permease protein UgpA (ugpA) of Escherichia coli O157:H7.